The sequence spans 219 residues: Protein-L-isoaspartate O-methyltransferase 2 (219 aa).

The active site involves Ser-67.

It belongs to the methyltransferase superfamily. L-isoaspartyl/D-aspartyl protein methyltransferase family.

It is found in the cytoplasm. The catalysed reaction is [protein]-L-isoaspartate + S-adenosyl-L-methionine = [protein]-L-isoaspartate alpha-methyl ester + S-adenosyl-L-homocysteine. In terms of biological role, catalyzes the methyl esterification of L-isoaspartyl residues in peptides and proteins that result from spontaneous decomposition of normal L-aspartyl and L-asparaginyl residues. It plays a role in the repair and/or degradation of damaged proteins. This is Protein-L-isoaspartate O-methyltransferase 2 from Nitrosococcus oceani (strain ATCC 19707 / BCRC 17464 / JCM 30415 / NCIMB 11848 / C-107).